We begin with the raw amino-acid sequence, 335 residues long: Glucokinase (335 aa).

11–16 lines the ATP pocket; sequence ADIGGT.

It belongs to the bacterial glucokinase family.

Its subcellular location is the cytoplasm. It catalyses the reaction D-glucose + ATP = D-glucose 6-phosphate + ADP + H(+). The chain is Glucokinase from Stenotrophomonas maltophilia (strain K279a).